Reading from the N-terminus, the 142-residue chain is Large ribosomal subunit protein bL17 (142 aa).

It belongs to the bacterial ribosomal protein bL17 family. Part of the 50S ribosomal subunit. Contacts protein L32.

In Bartonella henselae (strain ATCC 49882 / DSM 28221 / CCUG 30454 / Houston 1) (Rochalimaea henselae), this protein is Large ribosomal subunit protein bL17.